Reading from the N-terminus, the 625-residue chain is DNA-directed RNA polymerase subunit gamma (625 aa).

Zn(2+) contacts are provided by Cys-71, Cys-73, Cys-86, and Cys-89. Residues Asp-467, Asp-469, and Asp-471 each contribute to the Mg(2+) site.

This sequence belongs to the RNA polymerase beta' chain family. RpoC1 subfamily. As to quaternary structure, in cyanobacteria the RNAP catalytic core is composed of 2 alpha, 1 beta, 1 beta', 1 gamma and 1 omega subunit. When a sigma factor is associated with the core the holoenzyme is formed, which can initiate transcription. The cofactor is Mg(2+). Requires Zn(2+) as cofactor.

The catalysed reaction is RNA(n) + a ribonucleoside 5'-triphosphate = RNA(n+1) + diphosphate. In terms of biological role, DNA-dependent RNA polymerase catalyzes the transcription of DNA into RNA using the four ribonucleoside triphosphates as substrates. The protein is DNA-directed RNA polymerase subunit gamma of Gloeothece citriformis (strain PCC 7424) (Cyanothece sp. (strain PCC 7424)).